The chain runs to 151 residues: Phosphoribosyl-AMP cyclohydrolase (151 aa).

A Mg(2+)-binding site is contributed by aspartate 94. Cysteine 95 provides a ligand contact to Zn(2+). Aspartate 96 and aspartate 98 together coordinate Mg(2+). Zn(2+) contacts are provided by cysteine 112 and cysteine 119.

This sequence belongs to the PRA-CH family. Homodimer. Mg(2+) serves as cofactor. Zn(2+) is required as a cofactor.

It is found in the cytoplasm. The catalysed reaction is 1-(5-phospho-beta-D-ribosyl)-5'-AMP + H2O = 1-(5-phospho-beta-D-ribosyl)-5-[(5-phospho-beta-D-ribosylamino)methylideneamino]imidazole-4-carboxamide. It participates in amino-acid biosynthesis; L-histidine biosynthesis; L-histidine from 5-phospho-alpha-D-ribose 1-diphosphate: step 3/9. Its function is as follows. Catalyzes the hydrolysis of the adenine ring of phosphoribosyl-AMP. In Rhodopseudomonas palustris (strain ATCC BAA-98 / CGA009), this protein is Phosphoribosyl-AMP cyclohydrolase.